Reading from the N-terminus, the 698-residue chain is Elongation factor G 1 (698 aa).

Residues 8–290 (ERYRNIGICA…AVIEFLPSPT (283 aa)) form the tr-type G domain. Residues 17-24 (AHVDAGKT), 88-92 (DTPGH), and 142-145 (NKMD) contribute to the GTP site.

Belongs to the TRAFAC class translation factor GTPase superfamily. Classic translation factor GTPase family. EF-G/EF-2 subfamily.

The protein resides in the cytoplasm. In terms of biological role, catalyzes the GTP-dependent ribosomal translocation step during translation elongation. During this step, the ribosome changes from the pre-translocational (PRE) to the post-translocational (POST) state as the newly formed A-site-bound peptidyl-tRNA and P-site-bound deacylated tRNA move to the P and E sites, respectively. Catalyzes the coordinated movement of the two tRNA molecules, the mRNA and conformational changes in the ribosome. The protein is Elongation factor G 1 of Vibrio cholerae serotype O1 (strain ATCC 39315 / El Tor Inaba N16961).